We begin with the raw amino-acid sequence, 158 residues long: DNA-binding transcriptional repressor RacR (158 aa).

In terms of assembly, homooctamer.

Its function is as follows. Transcriptional regulator that represses the expression of ydaS and ydaT under normal physiological conditions. It binds to its own upstream sequence and represses the adjacent and divergently coded ydaS-ydaT operon. RacR-mediated down-regulation of ydaS and ydaT may be critical for cell survival. RacR ensures that the prophage DNA is maintained in the genome. When the expression of the racR gene is reduced, the prophage Rac is excised from the genome, possibly to counteract the lethal toxicity of YdaT. This is DNA-binding transcriptional repressor RacR (racR) from Escherichia coli (strain K12).